The chain runs to 564 residues: MFEDNNQKRPLYIPYAGPALLETPLLNKGSAFTSEERSNFNLEGLLPQNIETIEEQAERAYRQFMAFGNDMDKHIYLRNIQDTNETLFYRLLTNHLTEMLPVIYTPTVGKACEEFSNIYRRARGLFISYPDKDRIDDMLQNATKQNVKVIVVTDGERILGLGDQGIGGMGIPIGKLSLYTACGGISPAYCLPVVLDVGTNNQQLLNDPFYMGWRNPRISGEEYAEFVDAFIQAVKRRWPDILLQFEDFAQNNAMPLLNRYKNELCCFNDDIQGTAAVTLGSLIAACKASGAKLSEKRVAFLGAGSAGCGIAEQIVAQMKAEGLTDAQARSRVFMVDRFGLITDKIPNQLDFQRRLSQPVERIADWPVGDNISLLEVMEHGRPDILIGVSGQPGLFTEEVVKTMHKHCARPIIFPLSNPTSRVEATPADLIRWTDGQALVATGSPFAPVEYKGKRYVIAQCNNSFIFPGIGLGVIAAGATRVTDAMLMSASRALAECSPLVKGEEGSLLPDLADIHQVSRYIAKMVAKTAMLQGKAVQTPDEVIDQSIEANFWRPEYRRYRRTSF.

The active-site Proton donor is tyrosine 104. Arginine 157 is a binding site for NAD(+). Lysine 175 (proton acceptor) is an active-site residue. 3 residues coordinate a divalent metal cation: glutamate 246, aspartate 247, and aspartate 270. The NAD(+) site is built by aspartate 270 and asparagine 417.

It belongs to the malic enzymes family. Homotetramer. The cofactor is Mg(2+). Mn(2+) is required as a cofactor.

The catalysed reaction is (S)-malate + NAD(+) = pyruvate + CO2 + NADH. It carries out the reaction oxaloacetate + H(+) = pyruvate + CO2. The sequence is that of NAD-dependent malic enzyme from Aeromonas hydrophila subsp. hydrophila (strain ATCC 7966 / DSM 30187 / BCRC 13018 / CCUG 14551 / JCM 1027 / KCTC 2358 / NCIMB 9240 / NCTC 8049).